A 325-amino-acid chain; its full sequence is Tetraacyldisaccharide 4'-kinase (325 aa).

An ATP-binding site is contributed by 58–65 (TVGGSGKT).

This sequence belongs to the LpxK family.

It catalyses the reaction a lipid A disaccharide + ATP = a lipid IVA + ADP + H(+). It functions in the pathway glycolipid biosynthesis; lipid IV(A) biosynthesis; lipid IV(A) from (3R)-3-hydroxytetradecanoyl-[acyl-carrier-protein] and UDP-N-acetyl-alpha-D-glucosamine: step 6/6. Its function is as follows. Transfers the gamma-phosphate of ATP to the 4'-position of a tetraacyldisaccharide 1-phosphate intermediate (termed DS-1-P) to form tetraacyldisaccharide 1,4'-bis-phosphate (lipid IVA). This chain is Tetraacyldisaccharide 4'-kinase, found in Coxiella burnetii (strain CbuK_Q154) (Coxiella burnetii (strain Q154)).